The primary structure comprises 128 residues: Large ribosomal subunit protein eL8 (128 aa).

This sequence belongs to the eukaryotic ribosomal protein eL8 family. As to quaternary structure, part of the 50S ribosomal subunit. Probably part of the RNase P complex.

The protein localises to the cytoplasm. In terms of biological role, multifunctional RNA-binding protein that recognizes the K-turn motif in ribosomal RNA, the RNA component of RNase P, box H/ACA, box C/D and box C'/D' sRNAs. This is Large ribosomal subunit protein eL8 from Nitrosopumilus maritimus (strain SCM1).